Reading from the N-terminus, the 249-residue chain is MLFPDDFSTWEQTFQELMQEEKPGAKWSLHLDKNIVPDGAALGWRQHQQTVLGRFQCSRCCRSWTSAQVMILCHMYPDTLKSQGQARMRIFGQKCQKCFGCQFETPKFSTEIIKRILNNLVNYILQRYYGHRKIALTSNASLGEKVTLDGPHDTRNCEACSLNSHGRCALAHKVKPPRSPSPLPKSSSPSKSCPPPPQTRNTDFGNKTFQDFGNRTFQGCREPPQREIEPPLFLFLSIAAFALFSLFTR.

Topologically, residues 1-227 (MLFPDDFSTW…QGCREPPQRE (227 aa)) are cytoplasmic. The 3CxxC-type zinc-finger motif lies at 50–162 (TVLGRFQCSR…DTRNCEACSL (113 aa)). Positions 173 to 208 (KVKPPRSPSPLPKSSSPSKSCPPPPQTRNTDFGNKT) are disordered. Positions 199–208 (TRNTDFGNKT) are enriched in polar residues. A helical transmembrane segment spans residues 228–248 (IEPPLFLFLSIAAFALFSLFT).

This sequence belongs to the TMEM7 family. As to quaternary structure, interacts with TASR16. Interacts with OPRD1 and OPRM1; the interaction promotes cell surface localization of the OPDR1-OPRM1 heterodimer. As to expression, expressed at low levels in olfactory neurons. Upon viral infection, highly expressed in brain and different cells of nervous tissue.

The protein localises to the membrane. Its subcellular location is the cytoplasm. Chaperone protein that facilitates the trafficking and functional cell surface expression of some G-protein coupled receptors (GPCRs). Promotes functional expression of the bitter taste receptor TAS2R16. Also promotes functional expression of the opioid receptor heterodimer OPRD1-OPRM1. In addition, acts as a potent IFN-inducible suppressor of pathogens including lyssavirus rabies, influenza A or yellow fever virus. Mechanistically, associates with the viral replicase, binds viral RNA, and thereby suppresses viral genome amplification that replicates at the endoplasmic reticulum. In addition, restores antiviral signaling by interacting with and sequestering influenza virus protein NS1. This Mus musculus (Mouse) protein is Receptor-transporting protein 4 (Rtp4).